Consider the following 187-residue polypeptide: Oligoribonuclease (187 aa).

In terms of domain architecture, Exonuclease spans 7–170 (LCWLDMEMTG…DDILESIEEM (164 aa)). Tyr128 is an active-site residue.

This sequence belongs to the oligoribonuclease family.

The protein localises to the cytoplasm. In terms of biological role, 3'-to-5' exoribonuclease specific for small oligoribonucleotides. The polypeptide is Oligoribonuclease (Neisseria meningitidis serogroup A / serotype 4A (strain DSM 15465 / Z2491)).